Reading from the N-terminus, the 148-residue chain is Deoxyuridine 5'-triphosphate nucleotidohydrolase (148 aa).

Substrate-binding positions include 67-69, N80, 84-86, and M94; these read RSG and LID.

The protein belongs to the dUTPase family. It depends on Mg(2+) as a cofactor.

It carries out the reaction dUTP + H2O = dUMP + diphosphate + H(+). The protein operates within pyrimidine metabolism; dUMP biosynthesis; dUMP from dCTP (dUTP route): step 2/2. In terms of biological role, this enzyme is involved in nucleotide metabolism: it produces dUMP, the immediate precursor of thymidine nucleotides and it decreases the intracellular concentration of dUTP so that uracil cannot be incorporated into DNA. In Francisella philomiragia subsp. philomiragia (strain ATCC 25017 / CCUG 19701 / FSC 153 / O#319-036), this protein is Deoxyuridine 5'-triphosphate nucleotidohydrolase.